A 240-amino-acid polypeptide reads, in one-letter code: Urease accessory protein UreF (240 aa).

This sequence belongs to the UreF family. As to quaternary structure, ureD, UreF and UreG form a complex that acts as a GTP-hydrolysis-dependent molecular chaperone, activating the urease apoprotein by helping to assemble the nickel containing metallocenter of UreC. The UreE protein probably delivers the nickel.

Its subcellular location is the cytoplasm. Required for maturation of urease via the functional incorporation of the urease nickel metallocenter. The protein is Urease accessory protein UreF of Bradyrhizobium sp. (strain BTAi1 / ATCC BAA-1182).